We begin with the raw amino-acid sequence, 495 residues long: Membrane-bound lytic murein transglycosylase F (495 aa).

An N-terminal signal peptide occupies residues 1–29 (MEIRKLSLSTIRSIITSLSVLVLVISASA). The interval 30–273 (TLVRSTPPNV…VTKHFFERHI (244 aa)) is non-LT domain. An LT domain region spans residues 274-495 (DEVTTGEAMV…TAAQGENLSL (222 aa)). E320 is a catalytic residue.

This sequence in the N-terminal section; belongs to the bacterial solute-binding protein 3 family. The protein in the C-terminal section; belongs to the transglycosylase Slt family.

It is found in the cell outer membrane. It carries out the reaction Exolytic cleavage of the (1-&gt;4)-beta-glycosidic linkage between N-acetylmuramic acid (MurNAc) and N-acetylglucosamine (GlcNAc) residues in peptidoglycan, from either the reducing or the non-reducing ends of the peptidoglycan chains, with concomitant formation of a 1,6-anhydrobond in the MurNAc residue.. Functionally, murein-degrading enzyme that degrades murein glycan strands and insoluble, high-molecular weight murein sacculi, with the concomitant formation of a 1,6-anhydromuramoyl product. Lytic transglycosylases (LTs) play an integral role in the metabolism of the peptidoglycan (PG) sacculus. Their lytic action creates space within the PG sacculus to allow for its expansion as well as for the insertion of various structures such as secretion systems and flagella. The polypeptide is Membrane-bound lytic murein transglycosylase F (Cellvibrio japonicus (strain Ueda107) (Pseudomonas fluorescens subsp. cellulosa)).